A 533-amino-acid chain; its full sequence is (E)-beta-farnesene synthase (533 aa).

The Mg(2+) site is built by aspartate 286, aspartate 290, asparagine 430, serine 434, and glutamate 438. The short motif at 286 to 290 is the DDXXD motif element; sequence DDMMD.

This sequence belongs to the terpene synthase family. Mg(2+) serves as cofactor. It depends on Co(2+) as a cofactor. The cofactor is Mn(2+).

The protein localises to the cytoplasm. It carries out the reaction (2E,6E)-farnesyl diphosphate = (E)-beta-farnesene + diphosphate. The protein operates within secondary metabolite biosynthesis; terpenoid biosynthesis. Its function is as follows. Sesquiterpene cyclase catalyzing the production of beta-farnesene and alpha-bergamotene in equal amounts from farnesyl diphosphate. Involved in indirect defense by producing volatile signals attracting natural enemies of herbivores. The chain is (E)-beta-farnesene synthase from Zea mays subsp. huehuetenangensis (San Antonio Huista teosinte).